A 110-amino-acid chain; its full sequence is UPF0122 protein BCAH187_A3894 (110 aa).

It belongs to the UPF0122 family.

Functionally, might take part in the signal recognition particle (SRP) pathway. This is inferred from the conservation of its genetic proximity to ftsY/ffh. May be a regulatory protein. This chain is UPF0122 protein BCAH187_A3894, found in Bacillus cereus (strain AH187).